The following is a 288-amino-acid chain: MSQFSFTKMHGLGNSYIYVNMFEEQIPEEDLALVAEKVSNINTGIGADGMILICPSDVAPVKMRMFNNDGSEGKSCGNGLRCVAKYAYEHKLVEDTVFTIETLAGIVTAEVTVEEGKVTLAKIDMGAPRLTRAEIPMLGEGETPFIRENFLYNNHRYAFTAVSMGNPHAVIFVDDVEQAPLTTLGPVLETHEMFPERVNVEFIEILNEEEMNFRVWERGSGVTQACGTGACAAVVASILNGKMERGKEITVHLAGGDLMIAWTEEGNVLMKGPAEVICRGVYEYKIEA.

2 residues coordinate substrate: Asn-14 and Asn-67. The active-site Proton donor is the Cys-76. Substrate is bound by residues 77–78 (GN), Asn-166, Asn-199, and 217–218 (ER). Catalysis depends on Cys-226, which acts as the Proton acceptor. Substrate is bound at residue 227 to 228 (GT).

This sequence belongs to the diaminopimelate epimerase family. Homodimer.

It is found in the cytoplasm. It catalyses the reaction (2S,6S)-2,6-diaminopimelate = meso-2,6-diaminopimelate. The protein operates within amino-acid biosynthesis; L-lysine biosynthesis via DAP pathway; DL-2,6-diaminopimelate from LL-2,6-diaminopimelate: step 1/1. In terms of biological role, catalyzes the stereoinversion of LL-2,6-diaminopimelate (L,L-DAP) to meso-diaminopimelate (meso-DAP), a precursor of L-lysine and an essential component of the bacterial peptidoglycan. The protein is Diaminopimelate epimerase of Bacillus anthracis (strain A0248).